The chain runs to 203 residues: MKSRNGPLRVGIGGPVGSGKTALTEKLCKAMRDNYSVAVVTNDIYTTEDAEALVRMQALPSDRIVGVETGGCPHTAIREDATINLQAIAGLNQRIPDLDVVFIESGGDNLAATFSPDLADITIYVISVCQGEEIPRKGGPGITRSDLLVINKKDLAPYVGADLEVMDRDATRMRASRPFVFSDMKRGDGVSSIVSFLREQGGL.

G14–T21 provides a ligand contact to GTP.

Belongs to the SIMIBI class G3E GTPase family. UreG subfamily. In terms of assembly, homodimer. UreD, UreF and UreG form a complex that acts as a GTP-hydrolysis-dependent molecular chaperone, activating the urease apoprotein by helping to assemble the nickel containing metallocenter of UreC. The UreE protein probably delivers the nickel.

It localises to the cytoplasm. Its function is as follows. Facilitates the functional incorporation of the urease nickel metallocenter. This process requires GTP hydrolysis, probably effectuated by UreG. This is Urease accessory protein UreG from Rhizobium leguminosarum bv. trifolii (strain WSM2304).